The following is a 347-amino-acid chain: Holliday junction branch migration complex subunit RuvB (347 aa).

A large ATPase domain (RuvB-L) region spans residues 1 to 180; the sequence is MTSRVVSPEQ…FGIPCRMNFY (180 aa). ATP is bound by residues Leu-19, Arg-20, Gly-61, Lys-64, Thr-65, Thr-66, 127–129, Arg-170, Tyr-180, and Arg-217; that span reads EDF. Thr-65 is a Mg(2+) binding site. The interval 181–251 is small ATPAse domain (RuvB-S); that stretch reads EPAELEAIVS…VADAALNRLE (71 aa). The tract at residues 254 to 347 is head domain (RuvB-H); sequence RIGLDAMDRR…LLTRMDEEGE (94 aa). DNA is bound by residues Arg-290, Arg-309, and Arg-314.

Belongs to the RuvB family. As to quaternary structure, homohexamer. Forms an RuvA(8)-RuvB(12)-Holliday junction (HJ) complex. HJ DNA is sandwiched between 2 RuvA tetramers; dsDNA enters through RuvA and exits via RuvB. An RuvB hexamer assembles on each DNA strand where it exits the tetramer. Each RuvB hexamer is contacted by two RuvA subunits (via domain III) on 2 adjacent RuvB subunits; this complex drives branch migration. In the full resolvosome a probable DNA-RuvA(4)-RuvB(12)-RuvC(2) complex forms which resolves the HJ.

The protein resides in the cytoplasm. It carries out the reaction ATP + H2O = ADP + phosphate + H(+). Functionally, the RuvA-RuvB-RuvC complex processes Holliday junction (HJ) DNA during genetic recombination and DNA repair, while the RuvA-RuvB complex plays an important role in the rescue of blocked DNA replication forks via replication fork reversal (RFR). RuvA specifically binds to HJ cruciform DNA, conferring on it an open structure. The RuvB hexamer acts as an ATP-dependent pump, pulling dsDNA into and through the RuvAB complex. RuvB forms 2 homohexamers on either side of HJ DNA bound by 1 or 2 RuvA tetramers; 4 subunits per hexamer contact DNA at a time. Coordinated motions by a converter formed by DNA-disengaged RuvB subunits stimulates ATP hydrolysis and nucleotide exchange. Immobilization of the converter enables RuvB to convert the ATP-contained energy into a lever motion, pulling 2 nucleotides of DNA out of the RuvA tetramer per ATP hydrolyzed, thus driving DNA branch migration. The RuvB motors rotate together with the DNA substrate, which together with the progressing nucleotide cycle form the mechanistic basis for DNA recombination by continuous HJ branch migration. Branch migration allows RuvC to scan DNA until it finds its consensus sequence, where it cleaves and resolves cruciform DNA. This chain is Holliday junction branch migration complex subunit RuvB, found in Paramagnetospirillum magneticum (strain ATCC 700264 / AMB-1) (Magnetospirillum magneticum).